Consider the following 1533-residue polypeptide: Actin cytoskeleton-regulatory complex protein pan-1 (1533 aa).

The disordered stretch occupies residues 1–204 (MYSNSNAFLG…PPPPVKPQAT (204 aa)). 4 stretches are compositionally biased toward low complexity: residues 19 to 46 (QQPQ…QPTG), 53 to 136 (GFAP…FQTG), 143 to 170 (IPQQ…QPQP), and 177 to 193 (QIQA…QGGI). An EH 1 domain is found at 244–333 (DQARFETLFK…DHIKNEVSSM (90 aa)). The EF-hand 1 domain maps to 277–312 (LDGDSLSQIWTLADTTRSGQLHFPEFALAMYLCNLK). Residues 345-359 (AGSSSAPASNAPSFA) are compositionally biased toward low complexity. 2 disordered regions span residues 345–378 (AGSS…PQPS) and 393–423 (QQTG…GYAG). Polar residues-rich tracts occupy residues 360–378 (TQQN…PQPS) and 393–410 (QQTG…QQTG). The EH 2 domain maps to 513–602 (EKTRYDALFR…PELVPPSARN (90 aa)). The EF-hand 2 domain occupies 546 to 581 (LDKPDLERIWTLADNGNKGRLDLDEFAVAMHLIYRK). The span at 649-664 (NRKDATVFKNNDEEVG) shows a compositional bias: basic and acidic residues. Disordered regions lie at residues 649 to 691 (NRKD…GDDL), 894 to 917 (IEDS…WEDA), 935 to 1306 (SRAA…STNP), and 1334 to 1533 (DAIS…RVLD). Residues 690–890 (DLTIEQLRKK…RDVEDSVREF (201 aa)) are a coiled coil. Composition is skewed to basic and acidic residues over residues 894–916 (IEDS…RWED) and 935–947 (SRAA…DRQG). Residues 968–982 (TPSPSISRTSTPAST) are compositionally biased toward low complexity. Residues 1026-1209 (ETAAQRAERE…KQLEAIDDED (184 aa)) are a coiled coil. Basic and acidic residues-rich tracts occupy residues 1031 to 1063 (RAER…KLAE), 1090 to 1164 (GKAD…EEEK), and 1173 to 1203 (EAKE…KQLE). Positions 1204 to 1218 (AIDDEDSSSSDEEGP) are enriched in acidic residues. Positions 1221–1237 (ITPQASTPTVGGSQVGT) are enriched in polar residues. Residues 1279–1293 (SQSSEASTSSVAAPV) show a composition bias toward low complexity. Residues 1348 to 1367 (DDDDDDWGSEKGSDDEDSDD) show a composition bias toward acidic residues. The segment covering 1412-1495 (SSPPPPPAPV…PPPGGAPAPS (84 aa)) has biased composition (pro residues). Residues 1500-1517 (RPAGLLGEIQAGRALKKT) form the WH2 domain.

It belongs to the PAN1 family. As to quaternary structure, component of the PAN1 actin cytoskeleton-regulatory complex.

Its subcellular location is the cell membrane. The protein resides in the endosome membrane. It is found in the cytoplasm. It localises to the cytoskeleton. The protein localises to the actin patch. In terms of biological role, component of the PAN1 actin cytoskeleton-regulatory complex required for the internalization of endosomes during actin-coupled endocytosis. The complex links the site of endocytosis to the cell membrane-associated actin cytoskeleton. Mediates uptake of external molecules and vacuolar degradation of plasma membrane proteins. Plays a role in the proper organization of the cell membrane-associated actin cytoskeleton and promotes its destabilization. This chain is Actin cytoskeleton-regulatory complex protein pan-1 (pan-1), found in Neurospora crassa (strain ATCC 24698 / 74-OR23-1A / CBS 708.71 / DSM 1257 / FGSC 987).